We begin with the raw amino-acid sequence, 594 residues long: Potassium-transporting ATPase potassium-binding subunit (594 aa).

10 helical membrane passes run 3–23 (ADFL…APLL), 67–87 (AVAM…LQRL), 136–156 (ALTV…IALV), 179–199 (LYVL…QGVV), 287–307 (LEML…GEMV), 314–334 (VAIL…AAYF), 415–435 (GLYG…LMIG), 453–473 (VALV…VAVL), 519–539 (VLLG…ILAL), and 562–582 (LFVA…YVPA).

This sequence belongs to the KdpA family. As to quaternary structure, the system is composed of three essential subunits: KdpA, KdpB and KdpC.

The protein localises to the cell inner membrane. Functionally, part of the high-affinity ATP-driven potassium transport (or Kdp) system, which catalyzes the hydrolysis of ATP coupled with the electrogenic transport of potassium into the cytoplasm. This subunit binds the periplasmic potassium ions and delivers the ions to the membrane domain of KdpB through an intramembrane tunnel. The polypeptide is Potassium-transporting ATPase potassium-binding subunit (Bordetella bronchiseptica (strain ATCC BAA-588 / NCTC 13252 / RB50) (Alcaligenes bronchisepticus)).